We begin with the raw amino-acid sequence, 597 residues long: UvrABC system protein C (597 aa).

The region spanning 15–93 (NSPGVYQYFD…IKKHQPRFNV (79 aa)) is the GIY-YIG domain. The region spanning 207 to 242 (KDSLQRFRNQMKQHSEKMEFEDAQRIKNKIDVLENY) is the UVR domain.

This sequence belongs to the UvrC family. Interacts with UvrB in an incision complex.

Its subcellular location is the cytoplasm. Functionally, the UvrABC repair system catalyzes the recognition and processing of DNA lesions. UvrC both incises the 5' and 3' sides of the lesion. The N-terminal half is responsible for the 3' incision and the C-terminal half is responsible for the 5' incision. This chain is UvrABC system protein C, found in Christiangramia forsetii (strain DSM 17595 / CGMCC 1.15422 / KT0803) (Gramella forsetii).